We begin with the raw amino-acid sequence, 234 residues long: Sugar fermentation stimulation protein homolog (234 aa).

The protein belongs to the SfsA family.

This Citrobacter koseri (strain ATCC BAA-895 / CDC 4225-83 / SGSC4696) protein is Sugar fermentation stimulation protein homolog.